The primary structure comprises 497 residues: Cytosol aminopeptidase (497 aa).

Positions 267 and 272 each coordinate Mn(2+). K279 is a catalytic residue. Mn(2+) contacts are provided by D290, D349, and E351. R353 is an active-site residue.

It belongs to the peptidase M17 family. Mn(2+) serves as cofactor.

It is found in the cytoplasm. The enzyme catalyses Release of an N-terminal amino acid, Xaa-|-Yaa-, in which Xaa is preferably Leu, but may be other amino acids including Pro although not Arg or Lys, and Yaa may be Pro. Amino acid amides and methyl esters are also readily hydrolyzed, but rates on arylamides are exceedingly low.. It carries out the reaction Release of an N-terminal amino acid, preferentially leucine, but not glutamic or aspartic acids.. Its function is as follows. Presumably involved in the processing and regular turnover of intracellular proteins. Catalyzes the removal of unsubstituted N-terminal amino acids from various peptides. This is Cytosol aminopeptidase (pepA) from Pseudomonas putida (Arthrobacter siderocapsulatus).